We begin with the raw amino-acid sequence, 278 residues long: HTH-type transcriptional activator RhaS (278 aa).

The 99-residue stretch at 174–272 (NLLLAWLEDH…NWSPRDIRQG (99 aa)) folds into the HTH araC/xylS-type domain. DNA-binding regions (H-T-H motif) lie at residues 191-212 (DAVA…KQQT) and 239-262 (VTDI…HREF).

In terms of assembly, binds DNA as a dimer.

Its subcellular location is the cytoplasm. Functionally, activates expression of the rhaBAD and rhaT operons. The sequence is that of HTH-type transcriptional activator RhaS from Shigella boydii serotype 18 (strain CDC 3083-94 / BS512).